Here is a 37-residue protein sequence, read N- to C-terminus: Large ribosomal subunit protein bL36 (37 aa).

This sequence belongs to the bacterial ribosomal protein bL36 family.

This chain is Large ribosomal subunit protein bL36 (rpmJ), found in Mycoplasmoides gallisepticum (strain R(low / passage 15 / clone 2)) (Mycoplasma gallisepticum).